We begin with the raw amino-acid sequence, 89 residues long: Large ribosomal subunit protein bL27 (89 aa).

The segment at 1–21 is disordered; the sequence is MAHKKAGGSSRNGRDSQSKRL.

The protein belongs to the bacterial ribosomal protein bL27 family.

The polypeptide is Large ribosomal subunit protein bL27 (Rhizobium rhizogenes (strain K84 / ATCC BAA-868) (Agrobacterium radiobacter)).